The sequence spans 391 residues: D-xylose 1-dehydrogenase (NADP(+)) (391 aa).

The protein belongs to the Gfo/Idh/MocA family.

It carries out the reaction D-xylose + NADP(+) = D-xylono-1,5-lactone + NADPH + H(+). Functionally, NADP-dependent D-xylose dehydrogenase catalyzing the oxydation of D-xylose into D-xylonolactone. Also displays some, albeit lower activity with D-glucose, D-galactose and L-arabinose as substrate. Probably not involved in D-xylose degradation, as it has been shown that H.jecorina assimilates D-xylose via D-xylose reductase and xylitol dehydrogenase, and it is unable to grow on D-xylonic acid as sole carbon source. May play a role in the regeneration of NADP(+) in the presence of D-xylose. This chain is D-xylose 1-dehydrogenase (NADP(+)), found in Hypocrea jecorina (strain ATCC 56765 / BCRC 32924 / NRRL 11460 / Rut C-30) (Trichoderma reesei).